Reading from the N-terminus, the 194-residue chain is Anthranilate synthase component 2 (194 aa).

The region spanning 2 to 194 (KIFFIDNFDS…QSVGFLEGLL (193 aa)) is the Glutamine amidotransferase type-1 domain. 57-59 (GPG) is an L-glutamine binding site. Cysteine 84 functions as the Nucleophile; for GATase activity in the catalytic mechanism. Residues glutamine 88 and 134–135 (SL) contribute to the L-glutamine site. Active-site for GATase activity residues include histidine 170 and glutamate 172.

Heterotetramer consisting of two non-identical subunits: a beta subunit (TrpG) and a large alpha subunit (TrpE).

It carries out the reaction chorismate + L-glutamine = anthranilate + pyruvate + L-glutamate + H(+). It participates in amino-acid biosynthesis; L-tryptophan biosynthesis; L-tryptophan from chorismate: step 1/5. Its function is as follows. Part of a heterotetrameric complex that catalyzes the two-step biosynthesis of anthranilate, an intermediate in the biosynthesis of L-tryptophan. In the first step, the glutamine-binding beta subunit (TrpG) of anthranilate synthase (AS) provides the glutamine amidotransferase activity which generates ammonia as a substrate that, along with chorismate, is used in the second step, catalyzed by the large alpha subunit of AS (TrpE) to produce anthranilate. In the absence of TrpG, TrpE can synthesize anthranilate directly from chorismate and high concentrations of ammonia. The protein is Anthranilate synthase component 2 (trpG) of Helicobacter pylori (strain ATCC 700392 / 26695) (Campylobacter pylori).